A 310-amino-acid polypeptide reads, in one-letter code: 2-dehydro-3-deoxygluconokinase (310 aa).

Substrate is bound by residues 29–33 (GDTLN), tyrosine 89, 103–105 (YWR), and arginine 171. Residues 169 to 171 (NYR), 229 to 234 (KRGADA), and 262 to 265 (AAGD) contribute to the ATP site. Aspartate 265 contributes to the substrate binding site. Catalysis depends on aspartate 265, which acts as the Proton acceptor.

Belongs to the carbohydrate kinase PfkB family.

It catalyses the reaction 2-dehydro-3-deoxy-D-gluconate + ATP = 2-dehydro-3-deoxy-6-phospho-D-gluconate + ADP + H(+). It functions in the pathway carbohydrate acid metabolism; 2-dehydro-3-deoxy-D-gluconate degradation; D-glyceraldehyde 3-phosphate and pyruvate from 2-dehydro-3-deoxy-D-gluconate: step 1/2. Its function is as follows. Catalyzes the phosphorylation of 2-keto-3-deoxygluconate (KDG) to produce 2-keto-3-deoxy-6-phosphogluconate (KDPG). The chain is 2-dehydro-3-deoxygluconokinase from Dickeya dadantii (strain 3937) (Erwinia chrysanthemi (strain 3937)).